Consider the following 210-residue polypeptide: Probable nicotinate-nucleotide adenylyltransferase (210 aa).

Belongs to the NadD family.

The enzyme catalyses nicotinate beta-D-ribonucleotide + ATP + H(+) = deamido-NAD(+) + diphosphate. It functions in the pathway cofactor biosynthesis; NAD(+) biosynthesis; deamido-NAD(+) from nicotinate D-ribonucleotide: step 1/1. In terms of biological role, catalyzes the reversible adenylation of nicotinate mononucleotide (NaMN) to nicotinic acid adenine dinucleotide (NaAD). This Streptococcus pyogenes serotype M3 (strain ATCC BAA-595 / MGAS315) protein is Probable nicotinate-nucleotide adenylyltransferase.